A 159-amino-acid polypeptide reads, in one-letter code: 2-C-methyl-D-erythritol 2,4-cyclodiphosphate synthase (159 aa).

A divalent metal cation contacts are provided by Asp-8 and His-10. 4-CDP-2-C-methyl-D-erythritol 2-phosphate is bound by residues 8 to 10 (DVH) and 34 to 35 (HS). An a divalent metal cation-binding site is contributed by His-42. Residues 56-58 (DIG), 61-65 (FPDTD), 100-106 (AQAPKML), 132-135 (TTTE), Phe-139, and Arg-142 each bind 4-CDP-2-C-methyl-D-erythritol 2-phosphate.

It belongs to the IspF family. In terms of assembly, homotrimer. A divalent metal cation is required as a cofactor.

It catalyses the reaction 4-CDP-2-C-methyl-D-erythritol 2-phosphate = 2-C-methyl-D-erythritol 2,4-cyclic diphosphate + CMP. It functions in the pathway isoprenoid biosynthesis; isopentenyl diphosphate biosynthesis via DXP pathway; isopentenyl diphosphate from 1-deoxy-D-xylulose 5-phosphate: step 4/6. Its function is as follows. Involved in the biosynthesis of isopentenyl diphosphate (IPP) and dimethylallyl diphosphate (DMAPP), two major building blocks of isoprenoid compounds. Catalyzes the conversion of 4-diphosphocytidyl-2-C-methyl-D-erythritol 2-phosphate (CDP-ME2P) to 2-C-methyl-D-erythritol 2,4-cyclodiphosphate (ME-CPP) with a corresponding release of cytidine 5-monophosphate (CMP). The polypeptide is 2-C-methyl-D-erythritol 2,4-cyclodiphosphate synthase (Escherichia coli O139:H28 (strain E24377A / ETEC)).